The primary structure comprises 293 residues: ATP synthase gamma chain (293 aa).

Belongs to the ATPase gamma chain family. In terms of assembly, F-type ATPases have 2 components, CF(1) - the catalytic core - and CF(0) - the membrane proton channel. CF(1) has five subunits: alpha(3), beta(3), gamma(1), delta(1), epsilon(1). CF(0) has three main subunits: a, b and c.

The protein localises to the cell inner membrane. Functionally, produces ATP from ADP in the presence of a proton gradient across the membrane. The gamma chain is believed to be important in regulating ATPase activity and the flow of protons through the CF(0) complex. In Chlorobium chlorochromatii (strain CaD3), this protein is ATP synthase gamma chain.